A 502-amino-acid chain; its full sequence is Probable glycine dehydrogenase (decarboxylating) subunit 2 (502 aa).

The residue at position 273 (K273) is an N6-(pyridoxal phosphate)lysine.

The protein belongs to the GcvP family. C-terminal subunit subfamily. The glycine cleavage system is composed of four proteins: P, T, L and H. In this organism, the P 'protein' is a heterodimer of two subunits. Pyridoxal 5'-phosphate is required as a cofactor.

It catalyses the reaction N(6)-[(R)-lipoyl]-L-lysyl-[glycine-cleavage complex H protein] + glycine + H(+) = N(6)-[(R)-S(8)-aminomethyldihydrolipoyl]-L-lysyl-[glycine-cleavage complex H protein] + CO2. The glycine cleavage system catalyzes the degradation of glycine. The P protein binds the alpha-amino group of glycine through its pyridoxal phosphate cofactor; CO(2) is released and the remaining methylamine moiety is then transferred to the lipoamide cofactor of the H protein. This chain is Probable glycine dehydrogenase (decarboxylating) subunit 2, found in Pyrococcus abyssi (strain GE5 / Orsay).